The following is a 138-amino-acid chain: Basic phospholipase A2 Bs-N6 (138 aa).

The signal sequence occupies residues 1–16; the sequence is MRTLWIVAVLLVGVEG. Cystine bridges form between C42/C131, C44/C60, C59/C111, C65/C138, C66/C104, C73/C97, and C91/C102. Ca(2+)-binding residues include Y43, G45, and G47. H63 is an active-site residue. D64 serves as a coordination point for Ca(2+). Residue D105 is part of the active site.

As to quaternary structure, monomer. Ca(2+) is required as a cofactor. Post-translationally, contains 7 disulfide bonds. In terms of tissue distribution, expressed by the venom gland.

It is found in the secreted. The catalysed reaction is a 1,2-diacyl-sn-glycero-3-phosphocholine + H2O = a 1-acyl-sn-glycero-3-phosphocholine + a fatty acid + H(+). Functionally, snake venom phospholipase A2 (PLA2) that shows myotoxic activities. PLA2 catalyzes the calcium-dependent hydrolysis of the 2-acyl groups in 3-sn-phosphoglycerides. This Bothriechis schlegelii (Eyelash palm pitviper) protein is Basic phospholipase A2 Bs-N6.